The sequence spans 344 residues: DNA fragmentation factor subunit beta (344 aa).

Positions 7 to 83 (QPKCVKLRAL…LLTAGETWHG (77 aa)) constitute a CIDE-N domain.

In terms of assembly, heterodimer of DFFA and DFFB. Interacts with H1-1.

Its subcellular location is the cytoplasm. It is found in the nucleus. With respect to regulation, inhibited by DFFA (DFF45). In terms of biological role, nuclease that induces DNA fragmentation and chromatin condensation during apoptosis. Degrades naked DNA and induces apoptotic morphology. In Mus musculus (Mouse), this protein is DNA fragmentation factor subunit beta (Dffb).